A 307-amino-acid chain; its full sequence is 2-haloacid dehalogenase, configuration-inverting (307 aa).

It belongs to the HAD-like hydrolase superfamily. S-2-haloalkanoic acid dehalogenase family. Homodimer.

It catalyses the reaction an (S)-2-haloacid + H2O = a (2R)-2-hydroxycarboxylate + a halide anion + H(+). The catalysed reaction is an (R)-2-haloacid + H2O = a (2S)-2-hydroxycarboxylate + a halide anion + H(+). Functionally, dehalogenates both (S)- and (R)-2-haloalkanoic acids to the corresponding (R)- and (S)-hydroxyalkanoic acids, respectively, with inversion of configuration at C-2. Acts on 2-haloalkanoic acids whose carbon chain lengths are five or less. This Pseudomonas sp. (strain 113) protein is 2-haloacid dehalogenase, configuration-inverting.